Reading from the N-terminus, the 596-residue chain is PDZ and LIM domain protein 5 (596 aa).

Ser2 is subject to N-acetylserine. Position 2 is a phosphoserine (Ser2). The PDZ domain occupies 2–85; the sequence is SNYSVSLVGP…SLNMTLQRAS (84 aa). Residue Lys89 is modified to N6-acetyllysine; alternate. N6-succinyllysine; alternate is present on Lys89. Residue Lys89 forms a Glycyl lysine isopeptide (Lys-Gly) (interchain with G-Cter in SUMO2); alternate linkage. Ser111, Ser134, and Ser137 each carry phosphoserine. Disordered stretches follow at residues 121–165, 196–240, and 255–340; these read NNMA…SPSP, AGKT…GPPR, and THSD…RPGV. Residues 134-143 show a composition bias toward polar residues; that stretch reads SVSSPKVTSI. A compositionally biased stretch (low complexity) spans 144–165; the sequence is PSPSSAFTPAHATTSSHASPSP. Polar residues-rich tracts occupy residues 205 to 219 and 226 to 237; these read RQPT…TSQE and RGSQGDSKQQNG. 2 positions are modified to phosphoserine: Ser228 and Ser260. Basic and acidic residues-rich tracts occupy residues 258-273 and 293-304; these read DASK…DWRP and EHLKESEADNTK. Polar residues predominate over residues 305 to 335; the sequence is KANNSQEPSPQLASSVASTRSMPESLDSPTS. Phosphoserine is present on residues Ser309, Ser313, and Ser322. Position 350 is an N6-acetyllysine (Lys350). Residues 354–381 form a disordered region; it reads STGVIKSPSWQRPNQGVPSTGRISNSAT. Ser360 and Ser362 each carry phosphoserine. A compositionally biased stretch (polar residues) spans 361–381; that stretch reads PSWQRPNQGVPSTGRISNSAT. 3 consecutive LIM zinc-binding domains span residues 418-477, 477-536, and 536-596; these read PMCA…FFAP, PECG…LFGT, and TICH…SVNF.

In terms of assembly, interacts with various PKC isoforms through the LIM domains. Interacts with actin and alpha-actinin through the PDZ domain. Interacts (via LIM domains) with SIPA1L1/SPAR; this interaction may occur preferentially with isoform 1. In terms of tissue distribution, heart and skeletal muscle specific. Expression is commonly increased in the brain of patients with bipolar disorder, schizophrenia, and major depression.

The protein localises to the postsynaptic density. Its subcellular location is the presynapse. It is found in the postsynapse. It localises to the cytoplasm. The protein resides in the cytosol. Functionally, may play an important role in the heart development by scaffolding PKC to the Z-disk region. May play a role in the regulation of cardiomyocyte expansion. Isoforms lacking the LIM domains may negatively modulate the scaffolding activity of isoform 1. Overexpression promotes the development of heart hypertrophy. Contributes to the regulation of dendritic spine morphogenesis in neurons. May be required to restrain postsynaptic growth of excitatory synapses. Isoform 1, but not isoform 2, expression favors spine thinning and elongation. This is PDZ and LIM domain protein 5 from Homo sapiens (Human).